Consider the following 360-residue polypeptide: Phospho-N-acetylmuramoyl-pentapeptide-transferase (360 aa).

Residues 1–25 (MLVWLAEHLVKYYSGFNVFSYLTFR) lie on the Periplasmic side of the membrane. The helical transmembrane segment at 26–46 (AIVSLLTALFISLWMGPRMIA) threads the bilayer. Topologically, residues 47–71 (HLQKLSFGQVVRNDGPESHFSKRGT) are cytoplasmic. The chain crosses the membrane as a helical span at residues 72-92 (PTMGGIMILTAIVISVLLWAY). Position 93 (P93) is a topological domain, periplasmic. The helical transmembrane segment at 94–114 (SNPYVWCVLVVLVGYGVIGFV) threads the bilayer. The Cytoplasmic portion of the chain corresponds to 115 to 131 (DDYRKVVRKDTKGLIAR). Residues 132–152 (WKYFWMSVIALGVAFALYLAG) form a helical membrane-spanning segment. Topologically, residues 153–167 (KDTPATQLVVPFFKD) are periplasmic. Residues 168–188 (VMPQLGLFYILLAYFVIVGTG) traverse the membrane as a helical segment. Residues 189-198 (NAVNLTDGLD) lie on the Cytoplasmic side of the membrane. The helical transmembrane segment at 199–219 (GLAIMPTVFVAGGFALVAWAT) threads the bilayer. The Periplasmic portion of the chain corresponds to 220 to 235 (GNMNFASYLHIPYLRH). The chain crosses the membrane as a helical span at residues 236-256 (AGELVIVCTAIVGAGLGFLWF). Residues 257-262 (NTYPAQ) lie on the Cytoplasmic side of the membrane. The chain crosses the membrane as a helical span at residues 263–283 (VFMGDVGSLALGGALGIIAVL). Over 284 to 287 (LRQE) the chain is Periplasmic. A helical transmembrane segment spans residues 288–308 (FLLVIMGGVFVVETLSVILQV). Residues 309-337 (GSFKLRGQRIFRMAPIHHHYELKGWPEPR) are Cytoplasmic-facing. Residues 338 to 358 (VIVRFWIISLMLVLIGLATLK) traverse the membrane as a helical segment. The Periplasmic segment spans residues 359-360 (VR).

This sequence belongs to the glycosyltransferase 4 family. MraY subfamily. Mg(2+) serves as cofactor.

Its subcellular location is the cell inner membrane. The enzyme catalyses UDP-N-acetyl-alpha-D-muramoyl-L-alanyl-gamma-D-glutamyl-meso-2,6-diaminopimeloyl-D-alanyl-D-alanine + di-trans,octa-cis-undecaprenyl phosphate = di-trans,octa-cis-undecaprenyl diphospho-N-acetyl-alpha-D-muramoyl-L-alanyl-D-glutamyl-meso-2,6-diaminopimeloyl-D-alanyl-D-alanine + UMP. It functions in the pathway cell wall biogenesis; peptidoglycan biosynthesis. Its function is as follows. Catalyzes the initial step of the lipid cycle reactions in the biosynthesis of the cell wall peptidoglycan: transfers peptidoglycan precursor phospho-MurNAc-pentapeptide from UDP-MurNAc-pentapeptide onto the lipid carrier undecaprenyl phosphate, yielding undecaprenyl-pyrophosphoryl-MurNAc-pentapeptide, known as lipid I. In Shigella boydii serotype 18 (strain CDC 3083-94 / BS512), this protein is Phospho-N-acetylmuramoyl-pentapeptide-transferase.